Reading from the N-terminus, the 100-residue chain is Replication restart protein PriB (100 aa).

The SSB domain occupies 4–99; that stretch reads TNLVSLAALI…LRIQNIKEYK (96 aa).

The protein belongs to the PriB family. Homodimer. Component of the replication restart primosome. Primosome assembly occurs via a 'hand-off' mechanism. PriA binds to replication forks, subsequently PriB then DnaT bind; DnaT then displaces ssDNA to generate the helicase loading substrate. Interacts with PriA with high affinity, independent of DNA presence.

Its activity is regulated as follows. PriA:PriB complex-catalyzed duplex DNA winding is inhibited by CGS 15943 (CHEBI:131351); PriA is the drug target. Its function is as follows. Stimulates the DNA unwinding activity of PriA helicase, which does not seem to require single-stranded (ss)DNA-binding by PriB. Activates DNA-dependent ATP hydrolysis catalyzed by PriA. Weakly binds ssDNA. Weakly binds double-stranded (ds)DNA, a partial duplex DNA with a 3' ssDNA overhang, and a forked DNA structure with fully duplex leading and lagging strand arms in vitro. Functionally, involved in the restart of stalled replication forks, which reloads the replicative helicase on sites other than the origin of replication; the PriA-PriB pathway is the major replication restart pathway. During primosome assembly it facilitates complex formation between PriA and DnaT on DNA; stabilizes PriA on DNA. Stimulates the DNA unwinding activity of PriA helicase. The protein is Replication restart protein PriB of Neisseria gonorrhoeae (strain ATCC 700825 / FA 1090).